A 1187-amino-acid polypeptide reads, in one-letter code: ATP-dependent DNA helicase MPH1 (1187 aa).

The 168-residue stretch at 144-311 (IVERAFYDNL…QIIDNLNISK (168 aa)) folds into the Helicase ATP-binding domain. 157–164 (LPTGLGKT) is a binding site for ATP. The DEAH box motif lies at 259–262 (DEAH). One can recognise a Helicase C-terminal domain in the interval 486–681 (ELDDFFKNHE…FIQLRPQHRM (196 aa)). Disordered regions lie at residues 542 to 576 (VENF…MTGM), 781 to 848 (DKLV…NNQV), and 941 to 1003 (PEKP…LGVK). Residues 547 to 556 (KKKQKGQTKK) are compositionally biased toward basic residues. Polar residues predominate over residues 564–576 (TRSSSENAQMTGM). Basic and acidic residues predominate over residues 781-817 (DKLVDSDSESEVDKENENVIQEVDKSKNQEQNDHIIT). Residues 822–848 (TEQSVAGNTKSTTNGTSYSEPENNNQV) show a composition bias toward polar residues. A compositionally biased stretch (low complexity) spans 967-977 (SNSISIPSSTT). Basic and acidic residues predominate over residues 980-989 (SHNEVTRKVV).

It belongs to the DEAD box helicase family. DEAH subfamily. FANCM sub-subfamily. In terms of assembly, interacts with the MHF histone-fold complex to form the FANCM-MHF complex.

Its subcellular location is the nucleus. The enzyme catalyses ATP + H2O = ADP + phosphate + H(+). Its function is as follows. ATP-dependent DNA helicase involved in DNA damage repair by homologous recombination and in genome maintenance. Capable of unwinding D-loops. Plays a role in limiting crossover recombinants during mitotic DNA double-strand break (DSB) repair. Component of a FANCM-MHF complex which promotes gene conversion at blocked replication forks, probably by reversal of the stalled fork. This is ATP-dependent DNA helicase MPH1 from Candida albicans (strain SC5314 / ATCC MYA-2876) (Yeast).